A 68-amino-acid chain; its full sequence is Protein transport protein Sec61 subunit gamma (68 aa).

Topologically, residues 1-32 (MDQVMAWVEPGKQFAKDSIRLVKRCTKPDRKE) are cytoplasmic. A helical transmembrane segment spans residues 33 to 61 (FQKIAVATAIGFAIMGFIGFFVKLIHIPI). Residues 62–68 (NNIIVGS) lie on the Extracellular side of the membrane.

It belongs to the SecE/SEC61-gamma family. As to quaternary structure, heterotrimeric complex composed of SEC61-alpha, SEC61-beta and SEC61-gamma. Component of the ribosome-associated ER translocon complex.

Its subcellular location is the endoplasmic reticulum membrane. In terms of biological role, necessary for protein translocation in the endoplasmic reticulum and multi-pass membrane protein biogenesis. In Ciona intestinalis (Transparent sea squirt), this protein is Protein transport protein Sec61 subunit gamma (SEC61G).